We begin with the raw amino-acid sequence, 402 residues long: Phosphoglycerate kinase (402 aa).

Substrate-binding positions include 24-26, Arg40, 63-66, Arg122, and Arg155; these read DFN and HFGR. ATP contacts are provided by residues Lys206, Gly297, Glu328, and 357-360; that span reads GGDS.

It belongs to the phosphoglycerate kinase family. Monomer.

It localises to the cytoplasm. The catalysed reaction is (2R)-3-phosphoglycerate + ATP = (2R)-3-phospho-glyceroyl phosphate + ADP. It functions in the pathway carbohydrate degradation; glycolysis; pyruvate from D-glyceraldehyde 3-phosphate: step 2/5. The polypeptide is Phosphoglycerate kinase (Synechococcus sp. (strain ATCC 27144 / PCC 6301 / SAUG 1402/1) (Anacystis nidulans)).